Here is a 290-residue protein sequence, read N- to C-terminus: Elongation factor Ts (290 aa).

The involved in Mg(2+) ion dislocation from EF-Tu stretch occupies residues 83 to 86 (TDFV).

This sequence belongs to the EF-Ts family.

The protein localises to the cytoplasm. Associates with the EF-Tu.GDP complex and induces the exchange of GDP to GTP. It remains bound to the aminoacyl-tRNA.EF-Tu.GTP complex up to the GTP hydrolysis stage on the ribosome. The sequence is that of Elongation factor Ts (tsf) from Aquifex aeolicus (strain VF5).